A 397-amino-acid chain; its full sequence is Phosphoglycerate kinase (397 aa).

Substrate-binding positions include 25–27 (DLN), arginine 41, 64–67 (HLGR), arginine 118, and arginine 151. ATP is bound by residues lysine 202, glutamate 324, and 350–353 (GGDT).

Belongs to the phosphoglycerate kinase family. Monomer.

The protein localises to the cytoplasm. It carries out the reaction (2R)-3-phosphoglycerate + ATP = (2R)-3-phospho-glyceroyl phosphate + ADP. It participates in carbohydrate degradation; glycolysis; pyruvate from D-glyceraldehyde 3-phosphate: step 2/5. This Acidovorax sp. (strain JS42) protein is Phosphoglycerate kinase.